Reading from the N-terminus, the 439-residue chain is Ribosomal protein uS12 methylthiotransferase RimO (439 aa).

Residues 5–115 (PKIGFVSLGC…LIEAVHTHAP (111 aa)) form the MTTase N-terminal domain. Cys-14, Cys-50, Cys-79, Cys-146, Cys-150, and Cys-153 together coordinate [4Fe-4S] cluster. Residues 132–369 (LTPRHYSYLK…MGLQAQISTD (238 aa)) form the Radical SAM core domain. The region spanning 372-439 (QRFVGTEQQV…ESTEYDLIAD (68 aa)) is the TRAM domain.

It belongs to the methylthiotransferase family. RimO subfamily. [4Fe-4S] cluster serves as cofactor.

It localises to the cytoplasm. It carries out the reaction L-aspartate(89)-[ribosomal protein uS12]-hydrogen + (sulfur carrier)-SH + AH2 + 2 S-adenosyl-L-methionine = 3-methylsulfanyl-L-aspartate(89)-[ribosomal protein uS12]-hydrogen + (sulfur carrier)-H + 5'-deoxyadenosine + L-methionine + A + S-adenosyl-L-homocysteine + 2 H(+). Functionally, catalyzes the methylthiolation of an aspartic acid residue of ribosomal protein uS12. In Francisella tularensis subsp. novicida (strain U112), this protein is Ribosomal protein uS12 methylthiotransferase RimO.